Here is a 470-residue protein sequence, read N- to C-terminus: UDP-glycosyltransferase 72D1 (470 aa).

UDP-alpha-D-glucose is bound by residues Ser-276, 343 to 345 (APQ), 360 to 368 (HCGWSSALE), and 382 to 385 (YAEQ).

Belongs to the UDP-glycosyltransferase family.

In Arabidopsis thaliana (Mouse-ear cress), this protein is UDP-glycosyltransferase 72D1 (UGT72D1).